The sequence spans 265 residues: Transcription factor BHLH062 (265 aa).

The segment at 1–26 (MVPRDRVNAAAAGGGGEGRLVQSGIV) is disordered. A basic motif; degenerate region spans residues 35-48 (PKRIHKSEREKLKR). A bHLH domain is found at 35–85 (PKRIHKSEREKLKRDKQNDLFNELGNLLEPDRQNNGKACVLGETTRILKDL). The interval 49–85 (DKQNDLFNELGNLLEPDRQNNGKACVLGETTRILKDL) is helix-loop-helix motif. Residues 75–130 (LGETTRILKDLLSQVESLRKENSSLKNESHYVALERNELHDDNSMLRTEILELQNE) adopt a coiled-coil conformation. Positions 200 to 265 (ESATSEDSEP…TNEEDRIGRS (66 aa)) are disordered. Over residues 210–220 (SQEHGISDHVT) the composition is skewed to basic and acidic residues. A compositionally biased stretch (polar residues) spans 245-256 (QDQQCSSGTSGT).

Belongs to the bHLH protein family. Interacts with TIFY11A/JAZ9.

It is found in the nucleus. Its function is as follows. Transcription factor that plays a positive role in salt stress tolerance. Interacts with TIFY11A/JAZ9 and binds to the promoter of some potassium ion transporter genes to regulate potassium homeostasis during salt stress. The protein is Transcription factor BHLH062 of Oryza sativa subsp. japonica (Rice).